A 172-amino-acid polypeptide reads, in one-letter code: Adenylate kinase isoenzyme 6 (172 aa).

ATP-binding residues include Gly13, Gly15, Lys16, Thr17, and Thr18. Residues 33-56 (NVGDLAREGQLYDGYDEEYGCPIL) form an NMPbind region. The segment at 108–118 (TRGYNEKKLQD) is LID. Arg109 contributes to the ATP binding site.

The protein belongs to the adenylate kinase family. AK6 subfamily. As to quaternary structure, monomer and homodimer. Interacts with small ribosomal subunit protein uS11. Not a structural component of 43S pre-ribosomes, but transiently interacts with them by binding to uS11. Interacts with COIL (via C-terminus).

The protein resides in the cytoplasm. Its subcellular location is the nucleus. It localises to the nucleoplasm. It is found in the cajal body. The enzyme catalyses AMP + ATP = 2 ADP. It carries out the reaction ATP + H2O = ADP + phosphate + H(+). In terms of biological role, broad-specificity nucleoside monophosphate (NMP) kinase that catalyzes the reversible transfer of the terminal phosphate group between nucleoside triphosphates and monophosphates. Also has ATPase activity. Involved in the late cytoplasmic maturation steps of the 40S ribosomal particles, specifically 18S rRNA maturation. While NMP activity is not required for ribosome maturation, ATPase activity is. Associates transiently with small ribosomal subunit protein uS11. ATP hydrolysis breaks the interaction with uS11. May temporarily remove uS11 from the ribosome to enable a conformational change of the ribosomal RNA that is needed for the final maturation step of the small ribosomal subunit. Its NMP activity may have a role in nuclear energy homeostasis. May be involved in regulation of Cajal body (CB) formation. The protein is Adenylate kinase isoenzyme 6 of Mus musculus (Mouse).